We begin with the raw amino-acid sequence, 422 residues long: Serine hydroxymethyltransferase (422 aa).

(6S)-5,6,7,8-tetrahydrofolate contacts are provided by residues Leu118 and 122-124; that span reads GHL. An N6-(pyridoxal phosphate)lysine modification is found at Lys227. Residues Glu243 and 351–353 each bind (6S)-5,6,7,8-tetrahydrofolate; that span reads SPF.

The protein belongs to the SHMT family. Homodimer. It depends on pyridoxal 5'-phosphate as a cofactor.

It localises to the cytoplasm. The catalysed reaction is (6R)-5,10-methylene-5,6,7,8-tetrahydrofolate + glycine + H2O = (6S)-5,6,7,8-tetrahydrofolate + L-serine. Its pathway is one-carbon metabolism; tetrahydrofolate interconversion. It participates in amino-acid biosynthesis; glycine biosynthesis; glycine from L-serine: step 1/1. Its function is as follows. Catalyzes the reversible interconversion of serine and glycine with tetrahydrofolate (THF) serving as the one-carbon carrier. This reaction serves as the major source of one-carbon groups required for the biosynthesis of purines, thymidylate, methionine, and other important biomolecules. Also exhibits THF-independent aldolase activity toward beta-hydroxyamino acids, producing glycine and aldehydes, via a retro-aldol mechanism. In Kosmotoga olearia (strain ATCC BAA-1733 / DSM 21960 / TBF 19.5.1), this protein is Serine hydroxymethyltransferase.